The following is a 965-amino-acid chain: Phosphatidylethanolamine N-methyltransferase (965 aa).

A disordered region spans residues 1–55 (MSSSAADPFAARLNSDVRQRHPTASATSKNVEGTSQQKQQQQQQQSEANAAASRV). Over 1–91 (MSSSAADPFA…DPREPKNLSD (91 aa)) the chain is Lumenal. Residues 22–35 (PTASATSKNVEGTS) are compositionally biased toward polar residues. A compositionally biased stretch (low complexity) spans 36–45 (QQKQQQQQQQ). The helical transmembrane segment at 92–112 (VAVLAIIALHFLAAYYLPWGV) threads the bilayer. Topologically, residues 113 to 115 (KRP) are cytoplasmic. The chain crosses the membrane as a helical span at residues 116–136 (LFAAIFMFWRLAYNVGIGYLL). Residues 137–201 (TIQSKYKLLV…EYNTWLTFRR (65 aa)) lie on the Lumenal side of the membrane. A helical membrane pass occupies residues 202 to 222 (VVDLILMCDFISYCLFAIVCA). The Cytoplasmic portion of the chain corresponds to 223–229 (HKPDGEG). The helical transmembrane segment at 230-250 (LFMCFARWAAGITLVGFNLWV) threads the bilayer. The Lumenal segment spans residues 251–279 (KLDAHRVVKDYAWYWGDFFYLIEQELTFD). A helical transmembrane segment spans residues 280–300 (GVFELAPHPMYSIGYAGYYGI). At 301 to 306 (SMMAAS) the chain is on the cytoplasmic side. The chain crosses the membrane as a helical span at residues 307-327 (YDVLFISIIAHAAQFAFLVIV). The Lumenal portion of the chain corresponds to 328-389 (ENPHIEKTYN…IGLKNLDFFR (62 aa)). Residues 390–410 (ITDVAIVLLCAYLAVVTMVTP) traverse the membrane as a helical segment. Residues 411 to 417 (NTRFYQA) lie on the Cytoplasmic side of the membrane. Residues 418–438 (LFVLHALAWRLWYSAGLGVIL) traverse the membrane as a helical segment. The Lumenal portion of the chain corresponds to 439 to 467 (TMQSEEKMFTRHFLKYGESVGEAWRQWKG). The helical transmembrane segment at 468 to 488 (IYHLSNCLCHASFIAASYKMY) threads the bilayer. Residues 489-496 (EFPADWTY) are Cytoplasmic-facing. A helical transmembrane segment spans residues 497 to 517 (GWALLKHVVGLSLIALQVWTA). Over 518-573 (TSIYESLGEFGWFYGDFFFDSKRQLTYTSIYRFLNNPERVFGTAGLWGAALITWSR) the chain is Lumenal. A helical transmembrane segment spans residues 574–594 (AIFLMALAGHFLTLAFLAYVE). Residues 595–965 (KPHMQKVYGR…TTPVDSKFSE (371 aa)) lie on the Cytoplasmic side of the membrane.

It belongs to the class VI-like SAM-binding methyltransferase superfamily. CHO2 family.

It is found in the endoplasmic reticulum membrane. It catalyses the reaction a 1,2-diacyl-sn-glycero-3-phosphoethanolamine + S-adenosyl-L-methionine = a 1,2-diacyl-sn-glycero-3-phospho-N-methylethanolamine + S-adenosyl-L-homocysteine + H(+). The protein operates within phospholipid metabolism; phosphatidylcholine biosynthesis. Its function is as follows. Catalyzes the first step of the methylation pathway of phosphatidylcholine biosynthesis, the SAM-dependent methylation of phosphatidylethanolamine (PE) to phosphatidylmonomethylethanolamine (PMME). The sequence is that of Phosphatidylethanolamine N-methyltransferase from Neurospora crassa (strain ATCC 24698 / 74-OR23-1A / CBS 708.71 / DSM 1257 / FGSC 987).